The chain runs to 265 residues: Glutamate racemase (265 aa).

Substrate contacts are provided by residues aspartate 7–serine 8 and tyrosine 39–glycine 40. The active-site Proton donor/acceptor is cysteine 70. Position 71-72 (asparagine 71–threonine 72) interacts with substrate. Catalysis depends on cysteine 182, which acts as the Proton donor/acceptor. Threonine 183–histidine 184 contributes to the substrate binding site.

Belongs to the aspartate/glutamate racemases family.

The enzyme catalyses L-glutamate = D-glutamate. It functions in the pathway cell wall biogenesis; peptidoglycan biosynthesis. Its function is as follows. Provides the (R)-glutamate required for cell wall biosynthesis. The polypeptide is Glutamate racemase (Lachnospira eligens (strain ATCC 27750 / DSM 3376 / VPI C15-48 / C15-B4) (Eubacterium eligens)).